Reading from the N-terminus, the 231-residue chain is Large ribosomal subunit protein uL1 (231 aa).

This sequence belongs to the universal ribosomal protein uL1 family. In terms of assembly, part of the 50S ribosomal subunit.

In terms of biological role, binds directly to 23S rRNA. The L1 stalk is quite mobile in the ribosome, and is involved in E site tRNA release. Protein L1 is also a translational repressor protein, it controls the translation of the L11 operon by binding to its mRNA. The polypeptide is Large ribosomal subunit protein uL1 (Janthinobacterium sp. (strain Marseille) (Minibacterium massiliensis)).